We begin with the raw amino-acid sequence, 420 residues long: ATP phosphoribosyltransferase regulatory subunit (420 aa).

Belongs to the class-II aminoacyl-tRNA synthetase family. HisZ subfamily. As to quaternary structure, heteromultimer composed of HisG and HisZ subunits.

It localises to the cytoplasm. The protein operates within amino-acid biosynthesis; L-histidine biosynthesis; L-histidine from 5-phospho-alpha-D-ribose 1-diphosphate: step 1/9. In terms of biological role, required for the first step of histidine biosynthesis. May allow the feedback regulation of ATP phosphoribosyltransferase activity by histidine. The chain is ATP phosphoribosyltransferase regulatory subunit from Bacillus cereus (strain ZK / E33L).